The sequence spans 152 residues: Transcriptional regulator MraZ (152 aa).

SpoVT-AbrB domains lie at 5-52 and 81-124; these read ASAI…PFDE and AHEC…DETA.

This sequence belongs to the MraZ family. Forms oligomers.

Its subcellular location is the cytoplasm. It is found in the nucleoid. The sequence is that of Transcriptional regulator MraZ from Shewanella sediminis (strain HAW-EB3).